Consider the following 212-residue polypeptide: Pyridoxine/pyridoxamine 5'-phosphate oxidase (212 aa).

FMN contacts are provided by residues 57-62 (RMVLLK), 72-73 (YT), arginine 78, lysine 79, and glutamine 101. Lysine 62 is a substrate binding site. Residues tyrosine 119, arginine 123, and serine 127 each coordinate substrate. Residues 136-137 (QS) and tryptophan 181 each bind FMN. 187-189 (RLH) is a substrate binding site. Position 191 (arginine 191) interacts with FMN.

Belongs to the pyridoxamine 5'-phosphate oxidase family. In terms of assembly, homodimer. The cofactor is FMN.

It carries out the reaction pyridoxamine 5'-phosphate + O2 + H2O = pyridoxal 5'-phosphate + H2O2 + NH4(+). The enzyme catalyses pyridoxine 5'-phosphate + O2 = pyridoxal 5'-phosphate + H2O2. It participates in cofactor metabolism; pyridoxal 5'-phosphate salvage; pyridoxal 5'-phosphate from pyridoxamine 5'-phosphate: step 1/1. Its pathway is cofactor metabolism; pyridoxal 5'-phosphate salvage; pyridoxal 5'-phosphate from pyridoxine 5'-phosphate: step 1/1. Functionally, catalyzes the oxidation of either pyridoxine 5'-phosphate (PNP) or pyridoxamine 5'-phosphate (PMP) into pyridoxal 5'-phosphate (PLP). The protein is Pyridoxine/pyridoxamine 5'-phosphate oxidase of Erythrobacter litoralis (strain HTCC2594).